The chain runs to 151 residues: Small ribosomal subunit protein bS6 (151 aa).

The segment at 98-151 (EESPIQKAEKENRERKNRAERRAAEAAAATETEKSESEESAEEETSTDTTGEEE) is disordered. A compositionally biased stretch (acidic residues) spans 135–151 (EESAEEETSTDTTGEEE).

This sequence belongs to the bacterial ribosomal protein bS6 family.

In terms of biological role, binds together with bS18 to 16S ribosomal RNA. This Teredinibacter turnerae (strain ATCC 39867 / T7901) protein is Small ribosomal subunit protein bS6.